Consider the following 1025-residue polypeptide: Multidrug resistance protein MdtC (1025 aa).

The next 12 helical transmembrane spans lie at 3 to 23, 333 to 353, 360 to 380, 387 to 407, 431 to 451, 463 to 483, 528 to 548, 853 to 873, 875 to 895, 897 to 917, 953 to 973, and 984 to 1004; these read FFALFIYRPVATILLSVAITL, EVEQTLIISVALVILVVFLFL, IIPAVVVPVSLIGTFAAMYLC, LSLMALTIATGFVVDDAIVVL, VGFTVLSMSLSLVAVFLPLLL, FAVTLSVAIGISLLVSLTLTP, LVGVVLLGTIALNIWLYISIP, VILIIAAIATVYIVLGILYES, VHPLTILSTLPSAGVGALLAL, LFNAPFSLIALIGIMLLIGIV, PIMMTTLAALFGALPLVLSGG, and ITIVGGLVMSQLLTLYTTPVV.

The protein belongs to the resistance-nodulation-cell division (RND) (TC 2.A.6) family. MdtC subfamily. In terms of assembly, part of a tripartite efflux system composed of MdtA, MdtB and MdtC. MdtC forms a heteromultimer with MdtB.

Its subcellular location is the cell inner membrane. Its function is as follows. The MdtABC tripartite complex confers resistance against novobiocin and deoxycholate. This is Multidrug resistance protein MdtC from Escherichia coli O8 (strain IAI1).